The chain runs to 240 residues: Peptidyl-tRNA hydrolase (240 aa).

Tyr-14 contacts tRNA. His-19 acts as the Proton acceptor in catalysis. Positions 64, 66, and 112 each coordinate tRNA. The interval 196 to 227 (EKPAQKQQPKQQSHIRQARSQQAPAKLPETGP) is disordered. Positions 209–218 (HIRQARSQQA) are enriched in polar residues.

Belongs to the PTH family. As to quaternary structure, monomer.

It is found in the cytoplasm. The enzyme catalyses an N-acyl-L-alpha-aminoacyl-tRNA + H2O = an N-acyl-L-amino acid + a tRNA + H(+). In terms of biological role, hydrolyzes ribosome-free peptidyl-tRNAs (with 1 or more amino acids incorporated), which drop off the ribosome during protein synthesis, or as a result of ribosome stalling. Functionally, catalyzes the release of premature peptidyl moieties from peptidyl-tRNA molecules trapped in stalled 50S ribosomal subunits, and thus maintains levels of free tRNAs and 50S ribosomes. The protein is Peptidyl-tRNA hydrolase of Mesorhizobium japonicum (strain LMG 29417 / CECT 9101 / MAFF 303099) (Mesorhizobium loti (strain MAFF 303099)).